A 205-amino-acid polypeptide reads, in one-letter code: Small ribosomal subunit protein uS4 (205 aa).

Over residues 1–16 the composition is skewed to basic and acidic residues; the sequence is MSKRESSKYKIDRRMG. The tract at residues 1–46 is disordered; that stretch reads MSKRESSKYKIDRRMGENIWGRPKSPVNRREYGPGQHGQRRKGKLS. Positions 94–157 constitute an S4 RNA-binding domain; sequence SRLDAIVYRA…KQLVTVLEAV (64 aa).

Belongs to the universal ribosomal protein uS4 family. As to quaternary structure, part of the 30S ribosomal subunit. Contacts protein S5. The interaction surface between S4 and S5 is involved in control of translational fidelity.

One of the primary rRNA binding proteins, it binds directly to 16S rRNA where it nucleates assembly of the body of the 30S subunit. In terms of biological role, with S5 and S12 plays an important role in translational accuracy. The polypeptide is Small ribosomal subunit protein uS4 (Rhizobium etli (strain ATCC 51251 / DSM 11541 / JCM 21823 / NBRC 15573 / CFN 42)).